The primary structure comprises 715 residues: Fatty acid oxidation complex subunit alpha (715 aa).

The interval 1–189 (MIYQGETLSV…KVGAIDAVVA (189 aa)) is enoyl-CoA hydratase/isomerase. Asp-296 contacts substrate. The tract at residues 311–715 (AKATRHAAVL…EMAAQGKTFY (405 aa)) is 3-hydroxyacyl-CoA dehydrogenase. Residues Met-325, Asp-344, 401–403 (VVE), Lys-408, and Ser-430 each bind NAD(+). His-451 functions as the For 3-hydroxyacyl-CoA dehydrogenase activity in the catalytic mechanism. Asn-454 serves as a coordination point for NAD(+). The substrate site is built by Asn-501 and Tyr-661.

This sequence in the N-terminal section; belongs to the enoyl-CoA hydratase/isomerase family. It in the C-terminal section; belongs to the 3-hydroxyacyl-CoA dehydrogenase family. In terms of assembly, heterotetramer of two alpha chains (FadB) and two beta chains (FadA).

The catalysed reaction is a (3S)-3-hydroxyacyl-CoA + NAD(+) = a 3-oxoacyl-CoA + NADH + H(+). The enzyme catalyses a (3S)-3-hydroxyacyl-CoA = a (2E)-enoyl-CoA + H2O. It carries out the reaction a 4-saturated-(3S)-3-hydroxyacyl-CoA = a (3E)-enoyl-CoA + H2O. It catalyses the reaction (3S)-3-hydroxybutanoyl-CoA = (3R)-3-hydroxybutanoyl-CoA. The catalysed reaction is a (3Z)-enoyl-CoA = a 4-saturated (2E)-enoyl-CoA. The enzyme catalyses a (3E)-enoyl-CoA = a 4-saturated (2E)-enoyl-CoA. It functions in the pathway lipid metabolism; fatty acid beta-oxidation. Its function is as follows. Involved in the aerobic and anaerobic degradation of long-chain fatty acids via beta-oxidation cycle. Catalyzes the formation of 3-oxoacyl-CoA from enoyl-CoA via L-3-hydroxyacyl-CoA. It can also use D-3-hydroxyacyl-CoA and cis-3-enoyl-CoA as substrate. This chain is Fatty acid oxidation complex subunit alpha, found in Aeromonas salmonicida (strain A449).